The chain runs to 208 residues: Small ribosomal subunit protein uS4 (208 aa).

The S4 RNA-binding domain maps to 98-161 (RRLDNVIYRL…RKMPVIAEAQ (64 aa)).

This sequence belongs to the universal ribosomal protein uS4 family. Part of the 30S ribosomal subunit. Contacts protein S5. The interaction surface between S4 and S5 is involved in control of translational fidelity.

Functionally, one of the primary rRNA binding proteins, it binds directly to 16S rRNA where it nucleates assembly of the body of the 30S subunit. With S5 and S12 plays an important role in translational accuracy. This is Small ribosomal subunit protein uS4 from Oleidesulfovibrio alaskensis (strain ATCC BAA-1058 / DSM 17464 / G20) (Desulfovibrio alaskensis).